A 306-amino-acid polypeptide reads, in one-letter code: Curved DNA-binding protein (306 aa).

In terms of domain architecture, J spans 5–69 (DYYAIMGVKP…QRRAEYDQMW (65 aa)).

The protein resides in the cytoplasm. It is found in the nucleoid. DNA-binding protein that preferentially recognizes a curved DNA sequence. It is probably a functional analog of DnaJ; displays overlapping activities with DnaJ, but functions under different conditions, probably acting as a molecular chaperone in an adaptive response to environmental stresses other than heat shock. Lacks autonomous chaperone activity; binds native substrates and targets them for recognition by DnaK. Its activity is inhibited by the binding of CbpM. This is Curved DNA-binding protein from Escherichia coli O8 (strain IAI1).